The sequence spans 512 residues: NAD(P)H-quinone oxidoreductase subunit 2 B, chloroplastic (512 aa).

Helical transmembrane passes span 31–51 (FIFPECILIFGLILLLMIDLT), 57–77 (IPWLYFISSTSFVMSITALLF), 99–119 (IFQFLILLCSTLCIPLSVEYI), 124–144 (MAITEFLLFILTATLGGMFLC), 149–169 (LITIFVALECFSLCSYLLSGY), 183–203 (YLLMGGASSSILVYGFSWLYG), 229–249 (ISIALIFITVGIGFKLSLAPF), 261–281 (PTPVVAFLSVTSKVAALALAT), 295–315 (WHLLLEILAILSMIFGNLIAI), 323–343 (MLAYSSIGQIGYVIIGIIVGD), 354–374 (YMLFYIAMNLGTFACIILFGL), 395–415 (ALSLALCLLSLGGLPPLAGFF), 418–438 (LYLFWCGWQAGLYFLVSIGLL), and 484–504 (MIVCVIASTILGISMNPIIAI).

It belongs to the complex I subunit 2 family. As to quaternary structure, NDH is composed of at least 16 different subunits, 5 of which are encoded in the nucleus.

It localises to the plastid. The protein localises to the chloroplast thylakoid membrane. The catalysed reaction is a plastoquinone + NADH + (n+1) H(+)(in) = a plastoquinol + NAD(+) + n H(+)(out). It catalyses the reaction a plastoquinone + NADPH + (n+1) H(+)(in) = a plastoquinol + NADP(+) + n H(+)(out). In terms of biological role, NDH shuttles electrons from NAD(P)H:plastoquinone, via FMN and iron-sulfur (Fe-S) centers, to quinones in the photosynthetic chain and possibly in a chloroplast respiratory chain. The immediate electron acceptor for the enzyme in this species is believed to be plastoquinone. Couples the redox reaction to proton translocation, and thus conserves the redox energy in a proton gradient. The sequence is that of NAD(P)H-quinone oxidoreductase subunit 2 B, chloroplastic from Arabidopsis thaliana (Mouse-ear cress).